A 121-amino-acid chain; its full sequence is Large ribosomal subunit protein uL14 (121 aa).

This sequence belongs to the universal ribosomal protein uL14 family. As to quaternary structure, part of the 50S ribosomal subunit. Forms a cluster with proteins L3 and L19. In the 70S ribosome, L14 and L19 interact and together make contacts with the 16S rRNA in bridges B5 and B8.

Binds to 23S rRNA. Forms part of two intersubunit bridges in the 70S ribosome. This chain is Large ribosomal subunit protein uL14, found in Pseudoalteromonas atlantica (strain T6c / ATCC BAA-1087).